The chain runs to 971 residues: Translation initiation factor IF-2 (971 aa).

A compositionally biased stretch (basic and acidic residues) spans 49–63; that stretch reads HLRKSHGATDGDKRK. Disordered stretches follow at residues 49-85 and 99-386; these read HLRK…KART and RDDV…PTEP. The span at 105-114 shows a compositional bias: low complexity; sequence GAEQGQAQVA. The span at 121 to 181 shows a compositional bias: basic and acidic residues; that stretch reads ELKRREEEAR…EEEAAAKRAA (61 aa). Low complexity predominate over residues 182–200; that stretch reads AEAAAAQQAAAQQAAAEQE. A compositionally biased stretch (basic and acidic residues) spans 209 to 260; that stretch reads DEARAAAERAAQREAAKKAEDAAREAADKARAEQEEISKRRAAAEAEARAIR. A compositionally biased stretch (low complexity) spans 303–325; it reads ARPAVKKPAGAAAPATTQAPAGA. The span at 355-368 shows a compositional bias: gly residues; sequence SSGGVDRGWRGGPK. Residues 471-640 form the tr-type G domain; the sequence is PRPPVVTVMG…LLQAEVLELK (170 aa). Residues 480–487 are G1; that stretch reads GHVDHGKT. 480-487 lines the GTP pocket; sequence GHVDHGKT. Residues 505–509 form a G2 region; the sequence is GITQH. The tract at residues 526–529 is G3; the sequence is DTPG. Residues 526–530 and 580–583 each bind GTP; these read DTPGH and NKID. The tract at residues 580–583 is G4; the sequence is NKID. A G5 region spans residues 616–618; the sequence is SAK.

Belongs to the TRAFAC class translation factor GTPase superfamily. Classic translation factor GTPase family. IF-2 subfamily.

The protein resides in the cytoplasm. In terms of biological role, one of the essential components for the initiation of protein synthesis. Protects formylmethionyl-tRNA from spontaneous hydrolysis and promotes its binding to the 30S ribosomal subunits. Also involved in the hydrolysis of GTP during the formation of the 70S ribosomal complex. The polypeptide is Translation initiation factor IF-2 (Burkholderia cenocepacia (strain ATCC BAA-245 / DSM 16553 / LMG 16656 / NCTC 13227 / J2315 / CF5610) (Burkholderia cepacia (strain J2315))).